The following is a 440-amino-acid chain: Thymidine phosphorylase (440 aa).

This sequence belongs to the thymidine/pyrimidine-nucleoside phosphorylase family. Homodimer.

It carries out the reaction thymidine + phosphate = 2-deoxy-alpha-D-ribose 1-phosphate + thymine. It participates in pyrimidine metabolism; dTMP biosynthesis via salvage pathway; dTMP from thymine: step 1/2. Functionally, the enzymes which catalyze the reversible phosphorolysis of pyrimidine nucleosides are involved in the degradation of these compounds and in their utilization as carbon and energy sources, or in the rescue of pyrimidine bases for nucleotide synthesis. This is Thymidine phosphorylase from Rhizobium meliloti (strain 1021) (Ensifer meliloti).